The following is a 1029-amino-acid chain: Beta-galactosidase 2 (1029 aa).

Asparagine 104 and aspartate 203 together coordinate substrate. Aspartate 203 is a Na(+) binding site. Residues glutamate 418, histidine 420, and glutamate 463 each contribute to the Mg(2+) site. Residues glutamate 463 and 539-542 contribute to the substrate site; that span reads EYAH. Residue glutamate 463 is the Proton donor of the active site. The active-site Nucleophile is the glutamate 539. Asparagine 599 lines the Mg(2+) pocket. 2 residues coordinate Na(+): phenylalanine 603 and asparagine 606. Substrate is bound by residues asparagine 606 and tryptophan 1004.

Belongs to the glycosyl hydrolase 2 family. Homotetramer. Mg(2+) serves as cofactor. Na(+) is required as a cofactor.

It catalyses the reaction Hydrolysis of terminal non-reducing beta-D-galactose residues in beta-D-galactosides.. The protein is Beta-galactosidase 2 of Enterobacter cloacae.